The chain runs to 345 residues: Transmembrane protein 144 homolog (345 aa).

10 helical membrane-spanning segments follow: residues 3–23 (IAVGLSACALSSVLFGSMFVP), 32–52 (GIFVQWIMSTAILLVGIVVYS), 61–81 (PLAMLGGMFWALGNATAVPIM), 84–104 (IGIGMGMLVWGTTNCVAGWAA), 120–140 (PFLNYFGLVLVVFGGFLFSQI), 193–213 (LAIITSLVAGVFYGFTFVPVI), 233–253 (VFSHYIGIFCTASALMIGYVI), 265–285 (LVGPSMTAGSMWGIAQASWFV), 293–313 (AVSFPIISMVPGVIAALWSVF), and 324–344 (LRLLSIAVAITLIGAICVGVS).

The protein belongs to the TMEM144 family.

It is found in the membrane. The protein is Transmembrane protein 144 homolog of Caenorhabditis elegans.